A 323-amino-acid chain; its full sequence is Beta-ketoacyl-[acyl-carrier-protein] synthase III (323 aa).

Active-site residues include C113 and H250. An ACP-binding region spans residues 251–255; the sequence is QANKR. N280 is a catalytic residue.

It belongs to the thiolase-like superfamily. FabH family. In terms of assembly, homodimer.

Its subcellular location is the cytoplasm. The enzyme catalyses malonyl-[ACP] + acetyl-CoA + H(+) = 3-oxobutanoyl-[ACP] + CO2 + CoA. Its pathway is lipid metabolism; fatty acid biosynthesis. In terms of biological role, catalyzes the condensation reaction of fatty acid synthesis by the addition to an acyl acceptor of two carbons from malonyl-ACP. Catalyzes the first condensation reaction which initiates fatty acid synthesis and may therefore play a role in governing the total rate of fatty acid production. Possesses both acetoacetyl-ACP synthase and acetyl transacylase activities. Its substrate specificity determines the biosynthesis of branched-chain and/or straight-chain of fatty acids. This Chelativorans sp. (strain BNC1) protein is Beta-ketoacyl-[acyl-carrier-protein] synthase III.